The sequence spans 525 residues: FNIP repeat-containing protein DDB_G0274617 (525 aa).

An FNIP repeat occupies 65-107 (YQHEIKKEMLPSSIISIIFYNIKNILSSDSIPDTVKFLGFNGY).

In Dictyostelium discoideum (Social amoeba), this protein is FNIP repeat-containing protein DDB_G0274617.